Reading from the N-terminus, the 379-residue chain is Chaperone protein DnaJ (379 aa).

The 66-residue stretch at Asp5 to Gly70 folds into the J domain. The segment at Gly134–Thr212 adopts a CR-type zinc-finger fold. Residues Cys147, Cys150, Cys164, Cys167, Cys186, Cys189, Cys200, and Cys203 each coordinate Zn(2+). CXXCXGXG motif repeat units follow at residues Cys147 to Gly154, Cys164 to Gly171, Cys186 to Gly193, and Cys200 to Gly207.

The protein belongs to the DnaJ family. In terms of assembly, homodimer. It depends on Zn(2+) as a cofactor.

The protein resides in the cytoplasm. Functionally, participates actively in the response to hyperosmotic and heat shock by preventing the aggregation of stress-denatured proteins and by disaggregating proteins, also in an autonomous, DnaK-independent fashion. Unfolded proteins bind initially to DnaJ; upon interaction with the DnaJ-bound protein, DnaK hydrolyzes its bound ATP, resulting in the formation of a stable complex. GrpE releases ADP from DnaK; ATP binding to DnaK triggers the release of the substrate protein, thus completing the reaction cycle. Several rounds of ATP-dependent interactions between DnaJ, DnaK and GrpE are required for fully efficient folding. Also involved, together with DnaK and GrpE, in the DNA replication of plasmids through activation of initiation proteins. In Aliivibrio fischeri (strain ATCC 700601 / ES114) (Vibrio fischeri), this protein is Chaperone protein DnaJ.